A 369-amino-acid chain; its full sequence is Ribonuclease D (369 aa).

A 3'-5' exonuclease domain is found at 1–166 (MITTNDALAA…PIAHKLMEQV (166 aa)). The HRDC domain occupies 206–285 (RPRQLACLKL…AQAQALLEDA (80 aa)).

This sequence belongs to the RNase D family. A divalent metal cation serves as cofactor.

The protein resides in the cytoplasm. It carries out the reaction Exonucleolytic cleavage that removes extra residues from the 3'-terminus of tRNA to produce 5'-mononucleotides.. In terms of biological role, exonuclease involved in the 3' processing of various precursor tRNAs. Initiates hydrolysis at the 3'-terminus of an RNA molecule and releases 5'-mononucleotides. This is Ribonuclease D from Cronobacter turicensis (strain DSM 18703 / CCUG 55852 / LMG 23827 / z3032).